A 1036-amino-acid chain; its full sequence is MVIILLLVFFVGSSVSQPCHPNDLSALRELAGALKNKSVTESWLNGSRCCEWDGVFCEGSDVSGRVTKLVLPEKGLEGVISKSLGELTELRVLDLSRNQLKGEVPAEISKLEQLQVLDLSHNLLSGSVLGVVSGLKLIQSLNISSNSLSGKLSDVGVFPGLVMLNVSNNLFEGEIHPELCSSSGGIQVLDLSMNRLVGNLDGLYNCSKSIQQLHIDSNRLTGQLPDYLYSIRELEQLSLSGNYLSGELSKNLSNLSGLKSLLISENRFSDVIPDVFGNLTQLEHLDVSSNKFSGRFPPSLSQCSKLRVLDLRNNSLSGSINLNFTGFTDLCVLDLASNHFSGPLPDSLGHCPKMKILSLAKNEFRGKIPDTFKNLQSLLFLSLSNNSFVDFSETMNVLQHCRNLSTLILSKNFIGEEIPNNVTGFDNLAILALGNCGLRGQIPSWLLNCKKLEVLDLSWNHFYGTIPHWIGKMESLFYIDFSNNTLTGAIPVAITELKNLIRLNGTASQMTDSSGIPLYVKRNKSSNGLPYNQVSRFPPSIYLNNNRLNGTILPEIGRLKELHMLDLSRNNFTGTIPDSISGLDNLEVLDLSYNHLYGSIPLSFQSLTFLSRFSVAYNRLTGAIPSGGQFYSFPHSSFEGNLGLCRAIDSPCDVLMSNMLNPKGSSRRNNNGGKFGRSSIVVLTISLAIGITLLLSVILLRISRKDVDDRINDVDEETISGVSKALGPSKIVLFHSCGCKDLSVEELLKSTNNFSQANIIGCGGFGLVYKANFPDGSKAAVKRLSGDCGQMEREFQAEVEALSRAEHKNLVSLQGYCKHGNDRLLIYSFMENGSLDYWLHERVDGNMTLIWDVRLKIAQGAARGLAYLHKVCEPNVIHRDVKSSNILLDEKFEAHLADFGLARLLRPYDTHVTTDLVGTLGYIPPEYSQSLIATCRGDVYSFGVVLLELVTGRRPVEVCKGKSCRDLVSRVFQMKAEKREAELIDTTIRENVNERTVLEMLEIACKCIDHEPRRRPLIEEVVTWLEDLPMESVQQQ.

Positions 1 to 16 (MVIILLLVFFVGSSVS) are cleaved as a signal peptide. Residues asparagine 36 and asparagine 45 are each glycosylated (N-linked (GlcNAc...) asparagine). LRR repeat units lie at residues 89–111 (ELRVLDLSRNQLKGEVPAEISKL), 113–136 (QLQVLDLSHNLLSGSVLGVVSGLK), 137–159 (LIQSLNISSNSLSGKLSDVGVFP), 160–182 (GLVMLNVSNNLFEGEIHPELCSS), 185–207 (GIQVLDLSMNRLVGNLDGLYNCS), 209–231 (SIQQLHIDSNRLTGQLPDYLYSI), 233–256 (ELEQLSLSGNYLSGELSKNLSNLS), 257–279 (GLKSLLISENRFSDVIPDVFGNL), 281–303 (QLEHLDVSSNKFSGRFPPSLSQC), 305–326 (KLRVLDLRNNSLSGSINLNFTG), 329–351 (DLCVLDLASNHFSGPLPDSLGHC), 353–375 (KMKILSLAKNEFRGKIPDTFKNL), 377–398 (SLLFLSLSNNSFVDFSETMNVL), 403–423 (NLSTLILSKNFIGEEIPNNVT), 427–450 (NLAILALGNCGLRGQIPSWLLNCK), 451–473 (KLEVLDLSWNHFYGTIPHWIGKM), and 475–498 (SLFYIDFSNNTLTGAIPVAITELK). N-linked (GlcNAc...) asparagine glycosylation is found at asparagine 142, asparagine 165, and asparagine 205. 3 N-linked (GlcNAc...) asparagine glycosylation sites follow: asparagine 251, asparagine 254, and asparagine 278. N-linked (GlcNAc...) asparagine glycans are attached at residues asparagine 313 and asparagine 323. N-linked (GlcNAc...) asparagine glycosylation is found at asparagine 385, asparagine 403, and asparagine 421. N-linked (GlcNAc...) asparagine glycans are attached at residues asparagine 483, asparagine 504, asparagine 523, asparagine 549, and asparagine 571. LRR repeat units lie at residues 561-583 (ELHMLDLSRNNFTGTIPDSISGL) and 585-606 (NLEVLDLSYNHLYGSIPLSFQS). The helical transmembrane segment at 680–700 (IVVLTISLAIGITLLLSVILL) threads the bilayer. Position 751 is a phosphothreonine (threonine 751). In terms of domain architecture, Protein kinase spans 754-1025 (FSQANIIGCG…PLIEEVVTWL (272 aa)). Residues 760–768 (IGCGGFGLV) and lysine 782 each bind ATP. Tyrosine 827 and tyrosine 867 each carry phosphotyrosine. The active-site Proton acceptor is aspartate 880. Tyrosine 922 carries the post-translational modification Phosphotyrosine. An LRR 20 repeat occupies 995–1020 (RTVLEMLEIACKCIDHEPRRRPLIEE).

This sequence belongs to the protein kinase superfamily. Ser/Thr protein kinase family.

Its subcellular location is the cell membrane. The catalysed reaction is L-seryl-[protein] + ATP = O-phospho-L-seryl-[protein] + ADP + H(+). The enzyme catalyses L-threonyl-[protein] + ATP = O-phospho-L-threonyl-[protein] + ADP + H(+). Its function is as follows. Phytosulfokine receptor with a serine/threonine-protein kinase activity. This Arabidopsis thaliana (Mouse-ear cress) protein is Phytosulfokine receptor 2 (PSKR2).